We begin with the raw amino-acid sequence, 118 residues long: Class I hydrophobin hum2 (118 aa).

The N-terminal stretch at 1 to 19 (MQFKTIFATLAAFAAVASA) is a signal peptide. Intrachain disulfides connect cysteine 33–cysteine 98, cysteine 40–cysteine 92, cysteine 41–cysteine 74, and cysteine 99–cysteine 112.

This sequence belongs to the fungal hydrophobin family. In terms of assembly, self-assembles to form functional amyloid fibrils called rodlets. Self-assembly into fibrillar rodlets occurs spontaneously at hydrophobic:hydrophilic interfaces and the rodlets further associate laterally to form amphipathic monolayers.

The protein localises to the secreted. It is found in the cell wall. In terms of biological role, aerial growth, conidiation, and dispersal of filamentous fungi in the environment rely upon a capability of their secreting small amphipathic proteins called hydrophobins (HPBs) with low sequence identity. Class I can self-assemble into an outermost layer of rodlet bundles on aerial cell surfaces, conferring cellular hydrophobicity that supports fungal growth, development and dispersal; whereas Class II form highly ordered films at water-air interfaces through intermolecular interactions but contribute nothing to the rodlet structure. Hum2 is a class I hydrophobin which that plays a role in, but seems not to be crucial for the formation of aerial hyphae. Hydrophobins of Mycosarcoma maydis have been functionally replaced, at least partially, by repellents. This chain is Class I hydrophobin hum2, found in Mycosarcoma maydis (Corn smut fungus).